The following is a 352-amino-acid chain: Selenide, water dikinase (352 aa).

The active site involves Cys21. ATP is bound by residues Lys24 and 51–53; that span reads TND. Asp54 contributes to the Mg(2+) binding site. Residues Asp71, Asp94, and 141-143 contribute to the ATP site; that span reads GHS. Position 94 (Asp94) interacts with Mg(2+). Residue Asp231 participates in Mg(2+) binding.

This sequence belongs to the selenophosphate synthase 1 family. Class I subfamily. In terms of assembly, homodimer. The cofactor is Mg(2+).

It catalyses the reaction hydrogenselenide + ATP + H2O = selenophosphate + AMP + phosphate + 2 H(+). Synthesizes selenophosphate from selenide and ATP. This is Selenide, water dikinase from Myxococcus xanthus (strain DK1622).